Reading from the N-terminus, the 386-residue chain is MYNFVTLSILGAYLHTITLILLAAGSSSRFELDIKKQWLRVGDRPLWHFVADRCEKTGYFDKIIITSSLDDIEFMKNYADYTFVEGGQTRQQSLKNSLLHVDTEYVLVSDVARSCIDEAFLKKIISHVGKSDAVVPYLNITDTIVYDDKTIDRERVKRVQTPQLSLTTALKSALLREEEFTDESSAIVANGGSREFILGQESAHKITHIEDLKKLSCLSAPSSDTLSGVGFDVHAFDDKGEMFLGGIKIDSEYGFLAHSDGDVAIHALIDALLGAAGMGDIGMMFPDNDVKYKGADSKELLGTLVTKLRHFGFVIVNVDITIAAEKPRIGNYKMAMRKKISSILGIDAQRVNIKATTTEKLGFIGRGEGVGVIANANLKYFDWTKI.

The interval 1–225 (MYNFVTLSIL…SCLSAPSSDT (225 aa)) is 2-C-methyl-D-erythritol 4-phosphate cytidylyltransferase. The segment at 226–386 (LSGVGFDVHA…NLKYFDWTKI (161 aa)) is 2-C-methyl-D-erythritol 2,4-cyclodiphosphate synthase. Positions 232 and 234 each coordinate a divalent metal cation. 4-CDP-2-C-methyl-D-erythritol 2-phosphate contacts are provided by residues 232 to 234 (DVH) and 258 to 259 (HS). His-266 provides a ligand contact to a divalent metal cation. 4-CDP-2-C-methyl-D-erythritol 2-phosphate is bound by residues 280 to 282 (DIG), 285 to 289 (FPDND), 356 to 359 (TTTE), Phe-363, and Arg-366.

The protein in the N-terminal section; belongs to the IspD/TarI cytidylyltransferase family. IspD subfamily. This sequence in the C-terminal section; belongs to the IspF family. Requires a divalent metal cation as cofactor.

The enzyme catalyses 2-C-methyl-D-erythritol 4-phosphate + CTP + H(+) = 4-CDP-2-C-methyl-D-erythritol + diphosphate. The catalysed reaction is 4-CDP-2-C-methyl-D-erythritol 2-phosphate = 2-C-methyl-D-erythritol 2,4-cyclic diphosphate + CMP. Its pathway is isoprenoid biosynthesis; isopentenyl diphosphate biosynthesis via DXP pathway; isopentenyl diphosphate from 1-deoxy-D-xylulose 5-phosphate: step 2/6. It functions in the pathway isoprenoid biosynthesis; isopentenyl diphosphate biosynthesis via DXP pathway; isopentenyl diphosphate from 1-deoxy-D-xylulose 5-phosphate: step 4/6. Its function is as follows. Bifunctional enzyme that catalyzes the formation of 4-diphosphocytidyl-2-C-methyl-D-erythritol from CTP and 2-C-methyl-D-erythritol 4-phosphate (MEP) (IspD), and catalyzes the conversion of 4-diphosphocytidyl-2-C-methyl-D-erythritol 2-phosphate (CDP-ME2P) to 2-C-methyl-D-erythritol 2,4-cyclodiphosphate (ME-CPP) with a corresponding release of cytidine 5-monophosphate (CMP) (IspF). The sequence is that of Bifunctional enzyme IspD/IspF from Sulfurimonas denitrificans (strain ATCC 33889 / DSM 1251) (Thiomicrospira denitrificans (strain ATCC 33889 / DSM 1251)).